Consider the following 219-residue polypeptide: Cytidylate kinase (219 aa).

ATP is bound at residue 10-18; the sequence is GPAAAGKST.

Belongs to the cytidylate kinase family. Type 1 subfamily.

The protein localises to the cytoplasm. It carries out the reaction CMP + ATP = CDP + ADP. The enzyme catalyses dCMP + ATP = dCDP + ADP. This is Cytidylate kinase from Staphylococcus aureus (strain JH9).